The chain runs to 912 residues: Glutamate receptor 3.2 (912 aa).

The first 22 residues, 1-22 (MFWVLVLLSFIVLIGDGMISEG), serve as a signal peptide directing secretion. Over 23–587 (AGLRPRYVDV…TPWAFLRPFT (565 aa)) the chain is Extracellular. Asparagine 306, asparagine 338, asparagine 378, asparagine 417, asparagine 435, asparagine 445, and asparagine 532 each carry an N-linked (GlcNAc...) asparagine glycan. Residues 544 to 546 (DIA) and arginine 551 contribute to the glycine site. L-methionine contacts are provided by residues 544 to 546 (DIA) and arginine 551. Residues 588 to 608 (PPMWAVTAAFFLIVGSVIWIL) form a helical membrane-spanning segment. The Cytoplasmic segment spans residues 609–617 (EHRINDEFR). The chain crosses the membrane as a helical span at residues 618 to 638 (GPPRKQIVTILWFSFSTMFFS). Residues 639-649 (HRENTVSTLGR) lie on the Cytoplasmic side of the membrane. A helical transmembrane segment spans residues 650 to 670 (AVLLIWLFVVLIITSSYTASL). The Extracellular portion of the chain corresponds to 671-828 (TSILTVQQLN…EDSEQLKLRS (158 aa)). Tyrosine 703 provides a ligand contact to glycine. Tyrosine 703 is a binding site for L-methionine. N-linked (GlcNAc...) asparagine glycosylation occurs at asparagine 734. 743 to 746 (ERPY) contributes to the glycine binding site. 743–746 (ERPY) serves as a coordination point for L-methionine. Cysteine 755 and cysteine 809 are oxidised to a cystine. N-linked (GlcNAc...) asparagine glycosylation is found at asparagine 808 and asparagine 813. Residues 829–849 (FWGLFLVCGISCFIALFIYFF) form a helical membrane-spanning segment. Residues 850 to 912 (KIVRDFFRHG…DLSLKPSRPI (63 aa)) are Cytoplasmic-facing. The tract at residues 888-912 (KEDESKRRMKRKRNDDLSLKPSRPI) is disordered.

This sequence belongs to the glutamate-gated ion channel (TC 1.A.10.1) family. Forms a heteromeric channel with GLR3.4. In terms of tissue distribution, expressed in leaves and siliques, and at lower level in flowers and roots. Detected in the vascular tissues of both shoots and roots. Expressed in root phloem.

It is found in the cell membrane. Functionally, glutamate-gated receptor that probably acts as a non-selective cation channel. May be involved in light-signal transduction and calcium homeostasis via the regulation of calcium influx into cells. Could play a role in calcium unloading from the xylem vessels. Acts as a negative regulator of lateral root initiation and development. May restrict primordia numbers and position along the root axis by a signaling process originating in the phloem. This Arabidopsis thaliana (Mouse-ear cress) protein is Glutamate receptor 3.2.